Reading from the N-terminus, the 240-residue chain is 7-cyano-7-deazaguanine synthase (240 aa).

18-28 (FSGGQDSTTCL) lines the ATP pocket. Zn(2+) is bound by residues Cys197, Cys206, Cys209, and Cys212.

The protein belongs to the QueC family. The cofactor is Zn(2+).

The catalysed reaction is 7-carboxy-7-deazaguanine + NH4(+) + ATP = 7-cyano-7-deazaguanine + ADP + phosphate + H2O + H(+). It functions in the pathway purine metabolism; 7-cyano-7-deazaguanine biosynthesis. Its function is as follows. Catalyzes the ATP-dependent conversion of 7-carboxy-7-deazaguanine (CDG) to 7-cyano-7-deazaguanine (preQ(0)). The sequence is that of 7-cyano-7-deazaguanine synthase from Shewanella putrefaciens (strain CN-32 / ATCC BAA-453).